Consider the following 449-residue polypeptide: Probable multidrug resistance protein NorM (449 aa).

A run of 12 helical transmembrane segments spans residues Leu17 to Ala39, Val54 to Ala76, Val97 to Leu119, Ala129 to Gly151, Val164 to Pro186, Gly196 to Tyr215, Leu243 to Leu265, Met280 to Gly302, Leu315 to Phe337, Val352 to Met369, Met390 to Ala412, and Ala417 to Tyr439.

Belongs to the multi antimicrobial extrusion (MATE) (TC 2.A.66.1) family.

The protein localises to the cell inner membrane. In terms of biological role, multidrug efflux pump. This Acinetobacter baylyi (strain ATCC 33305 / BD413 / ADP1) protein is Probable multidrug resistance protein NorM (norM).